Consider the following 69-residue polypeptide: Conotoxin Eb6.20 (69 aa).

A signal peptide spans Val1–Ala17. Positions Glu18–Arg41 are excised as a propeptide. 3 cysteine pairs are disulfide-bonded: Cys43–Cys57, Cys50–Cys61, and Cys56–Cys68.

It belongs to the conotoxin O1 superfamily. As to expression, expressed by the venom duct.

It is found in the secreted. In Conus ebraeus (Hebrew cone), this protein is Conotoxin Eb6.20 (E1).